Consider the following 286-residue polypeptide: Ribosomal RNA small subunit methyltransferase H (286 aa).

Residues 25 to 27, aspartate 45, leucine 79, aspartate 93, and glutamine 100 contribute to the S-adenosyl-L-methionine site; that span reads GGH.

It belongs to the methyltransferase superfamily. RsmH family.

It is found in the cytoplasm. It carries out the reaction cytidine(1402) in 16S rRNA + S-adenosyl-L-methionine = N(4)-methylcytidine(1402) in 16S rRNA + S-adenosyl-L-homocysteine + H(+). In terms of biological role, specifically methylates the N4 position of cytidine in position 1402 (C1402) of 16S rRNA. This is Ribosomal RNA small subunit methyltransferase H from Petrotoga mobilis (strain DSM 10674 / SJ95).